The following is a 393-amino-acid chain: Protein TsgA (393 aa).

12 helical membrane passes run 11-31, 51-71, 78-98, 101-121, 134-154, 162-182, 206-226, 245-265, 273-293, 297-317, 332-352, and 361-381; these read WISFLSYALTGALVIVTGMVM, FLNAGILISIFLNAWLMEIVP, FGFLLMVLAVAGLMFSHSLAL, AAMFILGVVSGITMSIGTFLV, LLFTDSFFSMAGMIFPMIAAF, WYWVYACIGLVYVAIFILTFG, IGVLFLSVAALCYILGQLGFI, TLVSNFWMSYMVGMWAFSFIL, ILTVLAGLAAILMYVFNTGTP, AWSILALGFFSSAIYTTIITL, FVLTCGTIGTMLTFVVTGPIV, and LLTANGLYAVVFVMCFLLGFV.

The protein belongs to the major facilitator superfamily. TsgA family.

It localises to the cell inner membrane. The protein is Protein TsgA of Escherichia coli O139:H28 (strain E24377A / ETEC).